Consider the following 859-residue polypeptide: Leucine--tRNA ligase (859 aa).

The 'HIGH' region signature appears at P42–H52. The 'KMSKS' region signature appears at K618–S622. Residue K621 participates in ATP binding.

It belongs to the class-I aminoacyl-tRNA synthetase family.

It is found in the cytoplasm. It catalyses the reaction tRNA(Leu) + L-leucine + ATP = L-leucyl-tRNA(Leu) + AMP + diphosphate. This is Leucine--tRNA ligase from Buchnera aphidicola subsp. Acyrthosiphon pisum (strain APS) (Acyrthosiphon pisum symbiotic bacterium).